We begin with the raw amino-acid sequence, 334 residues long: CRISPR-associated protein Cas1 3 (334 aa).

3 residues coordinate Mn(2+): Glu-165, His-230, and Glu-245.

The protein belongs to the CRISPR-associated endonuclease Cas1 family. Homodimer, forms a heterotetramer with a Cas2 homodimer. The cofactor is Mg(2+). Mn(2+) is required as a cofactor.

CRISPR (clustered regularly interspaced short palindromic repeat), is an adaptive immune system that provides protection against mobile genetic elements (viruses, transposable elements and conjugative plasmids). CRISPR clusters contain spacers, sequences complementary to antecedent mobile elements, and target invading nucleic acids. CRISPR clusters are transcribed and processed into CRISPR RNA (crRNA). Acts as a dsDNA endonuclease. Involved in the integration of spacer DNA into the CRISPR cassette. The chain is CRISPR-associated protein Cas1 3 from Methanobrevibacter ruminantium (strain ATCC 35063 / DSM 1093 / JCM 13430 / OCM 146 / M1) (Methanobacterium ruminantium).